A 389-amino-acid polypeptide reads, in one-letter code: Terminal nucleotidyltransferase 5D (389 aa).

The protein belongs to the TENT family. Restricted to testis.

The enzyme catalyses RNA(n) + ATP = RNA(n)-3'-adenine ribonucleotide + diphosphate. Its function is as follows. Catalyzes the transfer of one adenosine molecule from an ATP to an mRNA poly(A) tail bearing a 3'-OH terminal group. This is Terminal nucleotidyltransferase 5D from Homo sapiens (Human).